The sequence spans 122 residues: Large ribosomal subunit protein uL14 (122 aa).

It belongs to the universal ribosomal protein uL14 family. Part of the 50S ribosomal subunit. Forms a cluster with proteins L3 and L19. In the 70S ribosome, L14 and L19 interact and together make contacts with the 16S rRNA in bridges B5 and B8.

Its function is as follows. Binds to 23S rRNA. Forms part of two intersubunit bridges in the 70S ribosome. This Bartonella bacilliformis (strain ATCC 35685 / KC583 / Herrer 020/F12,63) protein is Large ribosomal subunit protein uL14.